An 867-amino-acid polypeptide reads, in one-letter code: cGMP-dependent 3',5'-cGMP phosphodiesterase A (867 aa).

The segment covering 121–146 has biased composition (low complexity); that stretch reads IINSSSSTTDTSKTSPIKKQTSSSSP. 2 disordered regions span residues 121–167 and 180–241; these read IINS…SQQQ and HHHH…STFP. Positions 147–160 are enriched in pro residues; the sequence is PLSPQQQQPPPPLV. The span at 191–220 shows a compositional bias: low complexity; sequence NDNNNNTTTNNNNIEILEQQQQQQQQQQQQ. Over residues 221 to 232 the composition is skewed to acidic residues; it reads QDEDSTDVDEEF. The segment at 357-503 is phosphodiesterase activity; the sequence is STTGFVLWIN…GDTCYDPNRI (147 aa). A divalent metal cation is bound by residues histidine 399, histidine 401, and aspartate 403. Residues 607–721 and 734–851 each bind a nucleoside 3',5'-cyclic phosphate; these read IFRS…WEMR and VFSR…IFVD.

The protein belongs to the metallo-beta-lactamase superfamily. cNMP phosphodiesterase family. Mn(2+) serves as cofactor. Mg(2+) is required as a cofactor. Requires Zn(2+) as cofactor.

The protein localises to the cytoplasm. It is found in the cytosol. The enzyme catalyses 3',5'-cyclic GMP + H2O = GMP + H(+). In terms of biological role, phosphodiesterase specific for cGMP, which is activated by cGMP but not by cAMP. Involved in the degradation of intracellular cGMP, contributes to the control of cGMP signals. The sequence is that of cGMP-dependent 3',5'-cGMP phosphodiesterase A (pdeD) from Dictyostelium discoideum (Social amoeba).